We begin with the raw amino-acid sequence, 860 residues long: uncharacterized protein (860 aa).

2 stretches are compositionally biased toward basic and acidic residues: residues 334-345 (LEKKSLQSDSKN) and 536-551 (EDQK…LSDK). Disordered regions lie at residues 334–360 (LEKK…LRKE), 530–551 (EEDD…LSDK), 708–798 (ARKT…EDEF), and 813–842 (PFNE…RKAI). Composition is skewed to acidic residues over residues 716 to 725 (DEEGEIDEDE), 738 to 750 (EMDE…DSEE), and 813 to 824 (PFNETDDEEEIQ). Residues Ser744 and Ser748 each carry the phosphoserine modification.

This sequence belongs to the CBF/MAK21 family.

This is an uncharacterized protein from Schizosaccharomyces pombe (strain 972 / ATCC 24843) (Fission yeast).